A 216-amino-acid polypeptide reads, in one-letter code: LHFPL tetraspan subfamily member 3 protein (216 aa).

Transmembrane regions (helical) follow at residues 22-42 (IGVL…VCFV), 96-116 (FFIG…ALFF), 126-146 (ICGW…MIYP), and 177-197 (ILAI…FVLG).

This sequence belongs to the LHFP family.

Its subcellular location is the membrane. The polypeptide is LHFPL tetraspan subfamily member 3 protein (Danio rerio (Zebrafish)).